The sequence spans 457 residues: Siroheme synthase (457 aa).

Positions 1–204 are precorrin-2 dehydrogenase /sirohydrochlorin ferrochelatase; sequence MDHLPIFCQL…NDQKAITETT (204 aa). NAD(+)-binding positions include 22–23 and 43–44; these read DV and LA. Ser128 is subject to Phosphoserine. The interval 216–457 is uroporphyrinogen-III C-methyltransferase; sequence GEVVLVGAGP…RDKLNWFSNH (242 aa). Pro225 is a binding site for S-adenosyl-L-methionine. The Proton acceptor role is filled by Asp248. The active-site Proton donor is the Lys270. S-adenosyl-L-methionine-binding positions include 301-303, Ile306, 331-332, Met382, and Gly411; these read GGD and TA.

This sequence in the N-terminal section; belongs to the precorrin-2 dehydrogenase / sirohydrochlorin ferrochelatase family. The protein in the C-terminal section; belongs to the precorrin methyltransferase family.

The catalysed reaction is uroporphyrinogen III + 2 S-adenosyl-L-methionine = precorrin-2 + 2 S-adenosyl-L-homocysteine + H(+). It carries out the reaction precorrin-2 + NAD(+) = sirohydrochlorin + NADH + 2 H(+). The enzyme catalyses siroheme + 2 H(+) = sirohydrochlorin + Fe(2+). The protein operates within cofactor biosynthesis; adenosylcobalamin biosynthesis; precorrin-2 from uroporphyrinogen III: step 1/1. It participates in cofactor biosynthesis; adenosylcobalamin biosynthesis; sirohydrochlorin from precorrin-2: step 1/1. Its pathway is porphyrin-containing compound metabolism; siroheme biosynthesis; precorrin-2 from uroporphyrinogen III: step 1/1. It functions in the pathway porphyrin-containing compound metabolism; siroheme biosynthesis; siroheme from sirohydrochlorin: step 1/1. The protein operates within porphyrin-containing compound metabolism; siroheme biosynthesis; sirohydrochlorin from precorrin-2: step 1/1. In terms of biological role, multifunctional enzyme that catalyzes the SAM-dependent methylations of uroporphyrinogen III at position C-2 and C-7 to form precorrin-2 via precorrin-1. Then it catalyzes the NAD-dependent ring dehydrogenation of precorrin-2 to yield sirohydrochlorin. Finally, it catalyzes the ferrochelation of sirohydrochlorin to yield siroheme. The sequence is that of Siroheme synthase from Escherichia fergusonii (strain ATCC 35469 / DSM 13698 / CCUG 18766 / IAM 14443 / JCM 21226 / LMG 7866 / NBRC 102419 / NCTC 12128 / CDC 0568-73).